The sequence spans 756 residues: DNA mismatch repair protein Mlh1 (756 aa).

Ser-2 is subject to N-acetylserine. Residue Lys-33 is modified to N6-acetyllysine. ATP-binding positions include Asn-38, Asp-63, 82–84 (TSK), and 100–104 (RGEAL). 2 positions are modified to N6-acetyllysine: Lys-241 and Lys-361. Disordered regions lie at residues 355–378 (PSGEMVKSTTSLTSSSTSGSSDKV) and 400–491 (LSKP…KEMT). Residues 362–375 (STTSLTSSSTSGSS) show a composition bias toward low complexity. Lys-377 is modified (N6-acetyllysine). An interaction with EXO1 region spans residues 410–650 (AIVTEDKTDI…LLIDNYVPPL (241 aa)). Over residues 443-457 (KNQSLEGDTTKGTSE) the composition is skewed to polar residues. The Nuclear localization signal motif lies at 471-474 (KRHR). Ser-477 is modified (phosphoserine).

It belongs to the DNA mismatch repair MutL/HexB family. As to quaternary structure, component of the DNA mismatch repair (MMR) complex composed at least of MSH2, MSH3, MSH6, PMS1 and MLH1. Heterodimer of MLH1 and PMS2 (MutL alpha), MLH1 and PMS1 (MutL beta) or MLH1 and MLH3 (MutL gamma). Forms a ternary complex with MutS alpha (MSH2-MSH6) or MutS beta (MSH2-MSH3). Part of the BRCA1-associated genome surveillance complex (BASC), which contains BRCA1, MSH2, MSH6, MLH1, ATM, BLM, PMS2 and the RAD50-MRE11-NBS1 protein complex. This association could be a dynamic process changing throughout the cell cycle and within subnuclear domains. Interacts with MCM9; the interaction recruits MLH1 to chromatin. Interacts with MCM8. Interacts with PMS2; this interaction promotes MLH1 stability. Interacts with MBD4. Interacts with EXO1. Interacts with MTMR15/FAN1. Acetylated. Deacetylated by HDAC6 which prevents the MutL alpha complex, formed by the MLH1-PMS2 heterodimer, from being recruited to the MutS alpha complex, formed by the MSH2-MSH6 heterodimer, leading to tolerance of DNA damage. In terms of processing, ubiquitinated by UBR4; leading to proteasomal degradation. This ubiquitination is counteracted by the deubiquitinase USP5. Colon, lymphocytes, breast, lung, spleen, testis, prostate, thyroid, gall bladder and heart.

It is found in the nucleus. The protein resides in the chromosome. Heterodimerizes with PMS2 to form MutL alpha, a component of the post-replicative DNA mismatch repair system (MMR). DNA repair is initiated by MutS alpha (MSH2-MSH6) or MutS beta (MSH2-MSH3) binding to a dsDNA mismatch, then MutL alpha is recruited to the heteroduplex. Assembly of the MutL-MutS-heteroduplex ternary complex in presence of RFC and PCNA is sufficient to activate endonuclease activity of PMS2. It introduces single-strand breaks near the mismatch and thus generates new entry points for the exonuclease EXO1 to degrade the strand containing the mismatch. DNA methylation would prevent cleavage and therefore assure that only the newly mutated DNA strand is going to be corrected. MutL alpha (MLH1-PMS2) interacts physically with the clamp loader subunits of DNA polymerase III, suggesting that it may play a role to recruit the DNA polymerase III to the site of the MMR. Also implicated in DNA damage signaling, a process which induces cell cycle arrest and can lead to apoptosis in case of major DNA damages. Heterodimerizes with MLH3 to form MutL gamma which plays a role in meiosis. The protein is DNA mismatch repair protein Mlh1 (MLH1) of Homo sapiens (Human).